A 132-amino-acid polypeptide reads, in one-letter code: Large ribosomal subunit protein uL14 (132 aa).

This sequence belongs to the universal ribosomal protein uL14 family. In terms of assembly, part of the 50S ribosomal subunit. Forms a cluster with proteins L3 and L24e, part of which may contact the 16S rRNA in 2 intersubunit bridges.

Functionally, binds to 23S rRNA. Forms part of two intersubunit bridges in the 70S ribosome. The polypeptide is Large ribosomal subunit protein uL14 (Methanocorpusculum labreanum (strain ATCC 43576 / DSM 4855 / Z)).